A 510-amino-acid polypeptide reads, in one-letter code: GMP synthase [glutamine-hydrolyzing] (510 aa).

The Glutamine amidotransferase type-1 domain occupies 5–195 (LVLVVDFGGQ…LFNVCNLKGD (191 aa)). The active-site Nucleophile is C82. Catalysis depends on residues H169 and E171. In terms of domain architecture, GMPS ATP-PPase spans 196–385 (WSMSSFAEQQ…LGIPHKLVWR (190 aa)). 223-229 (SGGVDSS) provides a ligand contact to ATP.

In terms of assembly, homodimer.

The catalysed reaction is XMP + L-glutamine + ATP + H2O = GMP + L-glutamate + AMP + diphosphate + 2 H(+). The protein operates within purine metabolism; GMP biosynthesis; GMP from XMP (L-Gln route): step 1/1. Functionally, catalyzes the synthesis of GMP from XMP. The sequence is that of GMP synthase [glutamine-hydrolyzing] from Clostridium botulinum (strain ATCC 19397 / Type A).